The following is a 640-amino-acid chain: Threonine--tRNA ligase (640 aa).

One can recognise a TGS domain in the interval 1-61 (MPIITLPDGS…DHDATLQIIT (61 aa)). A catalytic region spans residues 242–533 (DHRKLGKRLD…LIEHYEGAFP (292 aa)). Residues cysteine 333, histidine 384, and histidine 510 each coordinate Zn(2+).

This sequence belongs to the class-II aminoacyl-tRNA synthetase family. In terms of assembly, homodimer. The cofactor is Zn(2+).

It is found in the cytoplasm. It catalyses the reaction tRNA(Thr) + L-threonine + ATP = L-threonyl-tRNA(Thr) + AMP + diphosphate + H(+). Catalyzes the attachment of threonine to tRNA(Thr) in a two-step reaction: L-threonine is first activated by ATP to form Thr-AMP and then transferred to the acceptor end of tRNA(Thr). Also edits incorrectly charged L-seryl-tRNA(Thr). The polypeptide is Threonine--tRNA ligase (Azotobacter vinelandii (strain DJ / ATCC BAA-1303)).